A 717-amino-acid polypeptide reads, in one-letter code: Protein Teyrha-meyrha (717 aa).

Residues 140–152 (FRTDSASPTCTSH) show a composition bias toward polar residues. Disordered stretches follow at residues 140-214 (FRTD…SNPA), 229-270 (HLAA…APPV), 440-498 (KIPP…QPGK), 511-539 (SQKD…GEAP), 563-594 (DSCG…MDTA), and 624-717 (QRRQ…DTKA). Low complexity predominate over residues 195 to 214 (ATSSSASSSSSSSCSTSNPA). Positions 235 to 263 (PHHHPHTHAHSHPHPLAHPHAHSHHHVGH) are enriched in basic residues. Positions 442–451 (PPEDDAKSQE) are enriched in basic and acidic residues. The span at 452–466 (EIETVDVESCNDEVP) shows a compositional bias: acidic residues. Polar residues predominate over residues 471 to 482 (ELATPSSGSSGT). Basic and acidic residues predominate over residues 513–522 (KDPHPDEHDV). 2 stretches are compositionally biased toward low complexity: residues 523–533 (STNVTTASSSS) and 570–580 (NDTNSSSSTHN). Polar residues predominate over residues 630–640 (QNVGSSRSLEN). A compositionally biased stretch (low complexity) spans 667–686 (NNNNNNNNNNNNSNSNNNNN). A compositionally biased stretch (polar residues) spans 687–704 (PSTKYAESMENSLSQLSS).

As to expression, in embryos, expressed specifically in M12 (at protein level).

The protein localises to the nucleus. Functionally, required for the correct synaptic targeting of motoneurons RP5 and V to muscle 12 (M12). May be involved in the negative regulation of Tl in M12. Involved in the correct patterning of veins in the proximal (costal) region of the wing blade. The protein is Protein Teyrha-meyrha of Drosophila melanogaster (Fruit fly).